Reading from the N-terminus, the 252-residue chain is Putative zinc finger CCCH domain-containing protein 58 (252 aa).

The segment at 35–62 adopts a C3H1-type zinc-finger fold; that stretch reads NHKSVLCMKWREGRCHNGVACRYAHGEE. 3 disordered regions span residues 71–95, 109–180, and 215–252; these read RVGGGGTSMHARSSPPRDGASSGST, RHGR…SAAD, and TATSEPSATSDDDAITTTTSSSTTDADELDAAVAAPPK. Low complexity-rich tracts occupy residues 133 to 149 and 229 to 238; these read SARSTAPTPPRAHTTPP and ITTTTSSSTT.

The polypeptide is Putative zinc finger CCCH domain-containing protein 58 (Oryza sativa subsp. japonica (Rice)).